The chain runs to 694 residues: Protein NPGR1 (694 aa).

The segment at 12–40 is disordered; the sequence is FEDQPGSPESLATRDFSASGLSSRNGGGD. TPR repeat units lie at residues 32-65, 66-101, 135-168, 188-221, 307-340, 551-584, 585-618, 620-654, and 655-688; these read LSSR…SLNY, EEAR…TPRI, LEAI…VENA, QKAL…PWNL, GERW…SESR, TEAW…CYYS, PRGW…EPDH, PSIV…DPRN, and HDAW…ELSA.

Interacts with calmodulin in a calcium-dependent manner. Expressed in pollen, flowers, fruits and leaves.

This is Protein NPGR1 from Arabidopsis thaliana (Mouse-ear cress).